A 232-amino-acid chain; its full sequence is Octanoyltransferase (232 aa).

A BPL/LPL catalytic domain is found at 44-219 (EHTGDELWVV…QLARQFGLVL (176 aa)). Substrate contacts are provided by residues 83-90 (RGGQVTYH), 150-152 (ALG), and 163-165 (GLS). Residue cysteine 181 is the Acyl-thioester intermediate of the active site.

Belongs to the LipB family.

The protein localises to the cytoplasm. It carries out the reaction octanoyl-[ACP] + L-lysyl-[protein] = N(6)-octanoyl-L-lysyl-[protein] + holo-[ACP] + H(+). The protein operates within protein modification; protein lipoylation via endogenous pathway; protein N(6)-(lipoyl)lysine from octanoyl-[acyl-carrier-protein]: step 1/2. Its function is as follows. Catalyzes the transfer of endogenously produced octanoic acid from octanoyl-acyl-carrier-protein onto the lipoyl domains of lipoate-dependent enzymes. Lipoyl-ACP can also act as a substrate although octanoyl-ACP is likely to be the physiological substrate. The chain is Octanoyltransferase from Xanthomonas campestris pv. campestris (strain 8004).